Reading from the N-terminus, the 537-residue chain is uncharacterized protein (537 aa).

The disordered stretch occupies residues 10-56 (HHDVEPQNVEEEPPLTGQTIVTEDKLETSAKDKKHESPSMSEDEEGS). Basic and acidic residues predominate over residues 31 to 46 (TEDKLETSAKDKKHES). A run of 12 helical transmembrane segments spans residues 90-110 (FVATVYTFLEVYVIWSSTACI), 133-153 (LFIVGNAFGPMLLGPMSDIFG), 156-176 (WVYVGSLILYIIFQIPQALAY), 180-200 (MMAINSAIAGAFGSSALANVA), 213-233 (GFGISLFVWGANAGASIGSPI), 243-263 (WFYWMNMIVGGFFVILCVLCP), 313-333 (PIIMALGLYNGFAYGLIFLYL), 348-368 (YMGANLTYLNFLVGVTIVVML), 393-413 (FLISLLTVWFFPAGLFWFAFT), 422-442 (SPLIAGGVLGVGDPQLWLAMI), 457-477 (IAAFTLPSFAIAAVLVHLGII), and 492-512 (AFISLSLVATIYVIYFFGHLI).

It belongs to the major facilitator superfamily. CAR1 family.

The protein localises to the endoplasmic reticulum. It is found in the golgi apparatus. The protein resides in the membrane. This is an uncharacterized protein from Schizosaccharomyces pombe (strain 972 / ATCC 24843) (Fission yeast).